Here is a 144-residue protein sequence, read N- to C-terminus: Large ribosomal subunit protein uL13 (144 aa).

The protein belongs to the universal ribosomal protein uL13 family. In terms of assembly, part of the 50S ribosomal subunit.

Functionally, this protein is one of the early assembly proteins of the 50S ribosomal subunit, although it is not seen to bind rRNA by itself. It is important during the early stages of 50S assembly. This is Large ribosomal subunit protein uL13 from Mycoplasmopsis agalactiae (strain NCTC 10123 / CIP 59.7 / PG2) (Mycoplasma agalactiae).